Reading from the N-terminus, the 550-residue chain is CCR4-NOT transcription complex subunit 6-like-A (550 aa).

The segment at 1–148 (MPKEKYDPPD…LYQEPDGMRK (148 aa)) is required for interaction with cnot1, cnot3 and cnot7. 4 LRR repeats span residues 52 to 73 (HLTV…IAKL), 75 to 96 (NLVY…LGNV), 98 to 120 (SLRE…GRLF), and 121 to 143 (RLQT…YQEP). The segment at 153–550 (MLDNLSVHPE…INGVHLPSRR (398 aa)) is nuclease domain. Glu-235 provides a ligand contact to Mg(2+). Residues Glu-235, Glu-271, His-355, and Pro-360 each coordinate substrate. Asp-405 is a Mg(2+) binding site. The Proton donor/acceptor role is filled by Asp-405. Positions 407, 474, and 479 each coordinate substrate.

The protein belongs to the CCR4/nocturin family. Component of the CCR4-NOT complex. It depends on Mg(2+) as a cofactor.

The protein resides in the cytoplasm. Its subcellular location is the nucleus. The enzyme catalyses Exonucleolytic cleavage of poly(A) to 5'-AMP.. Its function is as follows. Poly(A) nuclease with 3'-5' RNase activity. Catalytic component of the CCR4-NOT complex which is one of the major cellular mRNA deadenylases and is linked to various cellular processes including bulk mRNA degradation, miRNA-mediated repression, translational repression during translational initiation and general transcription regulation. Additional complex functions may be a consequence of its influence on mRNA expression. This is CCR4-NOT transcription complex subunit 6-like-A (cnot6l-a) from Xenopus laevis (African clawed frog).